Reading from the N-terminus, the 241-residue chain is Probable transcriptional regulatory protein str0195 (241 aa).

The protein belongs to the TACO1 family. YeeN subfamily.

The protein localises to the cytoplasm. The protein is Probable transcriptional regulatory protein str0195 of Streptococcus thermophilus (strain CNRZ 1066).